Reading from the N-terminus, the 326-residue chain is Probable iron chelatin transport system permease protein jhp_0822 (326 aa).

Helical transmembrane passes span 7-27 (IALA…ESLS), 64-84 (ILAL…QTIL), 91-111 (PFLL…IAVV), 113-133 (SNIA…VLAM), 142-162 (LSLV…AGAI), 164-184 (FFVI…SLSL), 187-207 (YKDC…LFLL), 241-261 (VASA…LVIP), 275-295 (LLLS…VVAK), and 301-321 (DLPV…WLLF).

The protein belongs to the binding-protein-dependent transport system permease family. FecCD subfamily.

The protein localises to the cell inner membrane. Part of a binding-protein-dependent transport system for an iron chelatin; probably responsible for the translocation of the substrate across the membrane. This chain is Probable iron chelatin transport system permease protein jhp_0822, found in Helicobacter pylori (strain J99 / ATCC 700824) (Campylobacter pylori J99).